Consider the following 382-residue polypeptide: Histidine biosynthesis bifunctional protein HisB (382 aa).

Positions 1 to 190 are histidinol-phosphatase; that stretch reads MQKIVFIDRD…EIYEFLRLPA (190 aa). Residue aspartate 8 is the Nucleophile of the active site. Residues aspartate 8, aspartate 10, and aspartate 129 each contribute to the Mg(2+) site. The active-site Proton donor is the aspartate 10. The interval 191 to 382 is imidazoleglycerol-phosphate dehydratase; the sequence is RTALVERNTK…DNLPSTKGVL (192 aa).

This sequence in the N-terminal section; belongs to the histidinol-phosphatase family. In the C-terminal section; belongs to the imidazoleglycerol-phosphate dehydratase family. Mg(2+) is required as a cofactor.

The protein localises to the cytoplasm. The enzyme catalyses D-erythro-1-(imidazol-4-yl)glycerol 3-phosphate = 3-(imidazol-4-yl)-2-oxopropyl phosphate + H2O. It catalyses the reaction L-histidinol phosphate + H2O = L-histidinol + phosphate. It participates in amino-acid biosynthesis; L-histidine biosynthesis; L-histidine from 5-phospho-alpha-D-ribose 1-diphosphate: step 6/9. Its pathway is amino-acid biosynthesis; L-histidine biosynthesis; L-histidine from 5-phospho-alpha-D-ribose 1-diphosphate: step 8/9. The chain is Histidine biosynthesis bifunctional protein HisB from Spirosoma linguale (strain ATCC 33905 / DSM 74 / LMG 10896 / Claus 1).